The following is a 199-amino-acid chain: Pneumococcal vaccine antigen A homolog (199 aa).

It localises to the cell surface. This chain is Pneumococcal vaccine antigen A homolog (pvaA), found in Streptococcus pyogenes serotype M6 (strain ATCC BAA-946 / MGAS10394).